A 659-amino-acid chain; its full sequence is Threonine--tRNA ligase (659 aa).

The 62-residue stretch at 3-64 folds into the TGS domain; the sequence is EKIRITLIDN…LEDGRLEIIT (62 aa). The catalytic stretch occupies residues 249–555; that stretch reads DHRRLGQEMD…LIEHHAGRFP (307 aa). C354, H405, and H532 together coordinate Zn(2+).

It belongs to the class-II aminoacyl-tRNA synthetase family. In terms of assembly, homodimer. Zn(2+) is required as a cofactor.

It is found in the cytoplasm. It catalyses the reaction tRNA(Thr) + L-threonine + ATP = L-threonyl-tRNA(Thr) + AMP + diphosphate + H(+). Catalyzes the attachment of threonine to tRNA(Thr) in a two-step reaction: L-threonine is first activated by ATP to form Thr-AMP and then transferred to the acceptor end of tRNA(Thr). Also edits incorrectly charged L-seryl-tRNA(Thr). The sequence is that of Threonine--tRNA ligase from Zymomonas mobilis subsp. mobilis (strain ATCC 31821 / ZM4 / CP4).